Reading from the N-terminus, the 108-residue chain is Somatoliberin (108 aa).

An N-terminal signal peptide occupies residues 1–20 (MPLWVFFFVILTLSNSSHCS). The propeptide occupies 21–31 (PPPPLTLRMRR). Residue L75 is modified to Leucine amide. Positions 78 to 108 (QVDSMWAEQKQMELESILVALLQKHSRNSQG) are excised as a propeptide.

It belongs to the glucagon family.

The protein resides in the secreted. GRF is released by the hypothalamus and acts on the adenohypophyse to stimulate the secretion of growth hormone. The protein is Somatoliberin (GHRH) of Homo sapiens (Human).